The primary structure comprises 423 residues: MPNTPHTMNLYIKNIAQLVTCQGTEAKHGREAMGQIHTIEGPAAVVIRDGIITFAGRMADVAPSMTEGCRELDATGRCVLPGFVDSHTHLVFGGYREDEFQWRLAGDSYMSIMERGGGIASTMRATRAESEDELKASAHRHLSNMMKMGVTTVEAKSGYGMNLETELKQLRVVRDLQDEQPLDLYSTFMGAHDTAPEYKGRPTEFIEYLCREVLPEVVRQNLAECCDIFTEKGVFDHEQTRRMLTAAKEAGLSVKMHADEIVPFGGAELAAELGCLSADHLLRISDAGIKALAESNTVATLLPCTAFSLRADYAPARKMIDAGCAVALGSDLNPGSCFSASVPLMFALATLYMGMTVEEAITALTINGAAAIGRADTIGSIEPGKKGDLVVLQYPSYKFLSYHFGMNLVEHTVKGGRVVYTNS.

Residues histidine 87 and histidine 89 each contribute to the Fe(3+) site. Residues histidine 87 and histidine 89 each coordinate Zn(2+). Arginine 96, tyrosine 159, and histidine 192 together coordinate 4-imidazolone-5-propanoate. N-formimidoyl-L-glutamate is bound at residue tyrosine 159. Histidine 257 serves as a coordination point for Fe(3+). Position 257 (histidine 257) interacts with Zn(2+). 4-imidazolone-5-propanoate is bound at residue glutamate 260. Position 331 (aspartate 331) interacts with Fe(3+). A Zn(2+)-binding site is contributed by aspartate 331. N-formimidoyl-L-glutamate contacts are provided by asparagine 333 and glycine 335. Serine 336 contacts 4-imidazolone-5-propanoate.

It belongs to the metallo-dependent hydrolases superfamily. HutI family. It depends on Zn(2+) as a cofactor. Fe(3+) is required as a cofactor.

It is found in the cytoplasm. It carries out the reaction 4-imidazolone-5-propanoate + H2O = N-formimidoyl-L-glutamate. It participates in amino-acid degradation; L-histidine degradation into L-glutamate; N-formimidoyl-L-glutamate from L-histidine: step 3/3. Functionally, catalyzes the hydrolytic cleavage of the carbon-nitrogen bond in imidazolone-5-propanoate to yield N-formimidoyl-L-glutamate. It is the third step in the universal histidine degradation pathway. The protein is Imidazolonepropionase of Porphyromonas gingivalis (strain ATCC 33277 / DSM 20709 / CIP 103683 / JCM 12257 / NCTC 11834 / 2561).